We begin with the raw amino-acid sequence, 140 residues long: Cytochrome c-type biogenesis protein CcmE (140 aa).

Topologically, residues 1–7 (MTKRQNR) are cytoplasmic. A helical; Signal-anchor for type II membrane protein transmembrane segment spans residues 8-28 (MVLVALLVIGVSLAGYLGLKA). The Periplasmic segment spans residues 29–140 (FNENLLYFLS…DALEKAKNKQ (112 aa)). Positions 120 and 124 each coordinate heme.

This sequence belongs to the CcmE/CycJ family.

It localises to the cell inner membrane. Functionally, heme chaperone required for the biogenesis of c-type cytochromes. Transiently binds heme delivered by CcmC and transfers the heme to apo-cytochromes in a process facilitated by CcmF and CcmH. The sequence is that of Cytochrome c-type biogenesis protein CcmE from Vesicomyosocius okutanii subsp. Calyptogena okutanii (strain HA).